The chain runs to 511 residues: Pancreatic alpha-amylase (511 aa).

The N-terminal stretch at M1 to A15 is a signal peptide. Q16 is subject to Pyrrolidone carboxylic acid. Cystine bridges form between C43–C101, C85–C130, and C156–C175. 3 residues coordinate Ca(2+): N115, R173, and D182. A chloride-binding site is contributed by R210. The Nucleophile role is filled by D212. Residue H216 participates in Ca(2+) binding. The Proton donor role is filled by E248. The chloride site is built by N313 and R352. A disulfide bridge links C393 with C399. N-linked (GlcNAc...) asparagine glycosylation is present at N427. Residues C465 and C477 are joined by a disulfide bond.

Belongs to the glycosyl hydrolase 13 family. As to quaternary structure, binds to the sea anemone inhibitor helianthamide and magnificamide. Requires Ca(2+) as cofactor. The cofactor is chloride.

The protein resides in the secreted. Its subcellular location is the extracellular space. It carries out the reaction Endohydrolysis of (1-&gt;4)-alpha-D-glucosidic linkages in polysaccharides containing three or more (1-&gt;4)-alpha-linked D-glucose units.. The polypeptide is Pancreatic alpha-amylase (AMY2) (Sus scrofa (Pig)).